A 265-amino-acid chain; its full sequence is Type 1 encapsulin shell protein (265 aa).

This sequence belongs to the encapsulin family. Family 1 subfamily. As to quaternary structure, found in a complex with DyP, suggesting it is the native cargo protein. Monomers form pentamers, which assemble to form hollow shells composed of 60 subunits with several openings.

Its subcellular location is the encapsulin nanocompartment. The protein resides in the cell membrane. Shell component of a type 1 encapsulin nanocompartment. Assembles into proteinaceous shells 23-24 nm in diameter with 2-2.5 nm thick walls. Cargo protein DyP is targeted to the interior via its C-terminal extension; probably only 1 DyP hexamer is incorporated into each shell. Probably involved in protection against oxidative damage. The polypeptide is Type 1 encapsulin shell protein (Mycolicibacterium paratuberculosis (strain ATCC BAA-968 / K-10) (Mycobacterium paratuberculosis)).